The sequence spans 337 residues: Glyceraldehyde-3-phosphate dehydrogenase, cytosolic (337 aa).

Residues 13–14, Asp-35, and Arg-82 contribute to the NAD(+) site; that span reads RI. Residues 153 to 155, Thr-184, 213 to 214, and Arg-236 each bind D-glyceraldehyde 3-phosphate; these read SCT and TG. The active-site Nucleophile is Cys-154. Asn-318 lines the NAD(+) pocket.

This sequence belongs to the glyceraldehyde-3-phosphate dehydrogenase family. As to quaternary structure, homotetramer.

The protein resides in the cytoplasm. The catalysed reaction is D-glyceraldehyde 3-phosphate + phosphate + NAD(+) = (2R)-3-phospho-glyceroyl phosphate + NADH + H(+). The protein operates within carbohydrate degradation; glycolysis; pyruvate from D-glyceraldehyde 3-phosphate: step 1/5. Key enzyme in glycolysis that catalyzes the first step of the pathway by converting D-glyceraldehyde 3-phosphate (G3P) into 3-phospho-D-glyceroyl phosphate. Essential for the maintenance of cellular ATP levels and carbohydrate metabolism. The chain is Glyceraldehyde-3-phosphate dehydrogenase, cytosolic (GAPC) from Antirrhinum majus (Garden snapdragon).